We begin with the raw amino-acid sequence, 61 residues long: Photosystem II reaction center protein K (61 aa).

Residues 1-24 constitute a propeptide that is removed on maturation; that stretch reads MLNIFSLICICINSALHSSSFFFA. Residues 40–60 traverse the membrane as a helical segment; sequence MPVIPVLFFLLALVWQAAVSF.

It belongs to the PsbK family. PSII is composed of 1 copy each of membrane proteins PsbA, PsbB, PsbC, PsbD, PsbE, PsbF, PsbH, PsbI, PsbJ, PsbK, PsbL, PsbM, PsbT, PsbX, PsbY, PsbZ, Psb30/Ycf12, at least 3 peripheral proteins of the oxygen-evolving complex and a large number of cofactors. It forms dimeric complexes.

The protein resides in the plastid. It localises to the chloroplast thylakoid membrane. Its function is as follows. One of the components of the core complex of photosystem II (PSII). PSII is a light-driven water:plastoquinone oxidoreductase that uses light energy to abstract electrons from H(2)O, generating O(2) and a proton gradient subsequently used for ATP formation. It consists of a core antenna complex that captures photons, and an electron transfer chain that converts photonic excitation into a charge separation. This is Photosystem II reaction center protein K from Liriodendron tulipifera (Tuliptree).